Here is a 692-residue protein sequence, read N- to C-terminus: Potassium-transporting ATPase ATP-binding subunit (692 aa).

The next 4 membrane-spanning stretches (helical) occupy residues 50-70, 74-94, 240-260, and 266-286; these read PIMF…FLPS, SIPG…VLFA, LTLI…YLGF, and VLVA…LSAI. Asp319 functions as the 4-aspartylphosphate intermediate in the catalytic mechanism. ATP-binding positions include Asp356, Glu360, 388 to 395, and Lys407; that span reads FKAETRMS. Residues Asp530 and Asp534 each contribute to the Mg(2+) site. A run of 3 helical transmembrane segments spans residues 600–620, 628–648, and 672–692; these read FAII…LNIM, AILS…PLAM, and GGVI…GLFI.

Belongs to the cation transport ATPase (P-type) (TC 3.A.3) family. Type IA subfamily. The system is composed of three essential subunits: KdpA, KdpB and KdpC.

It is found in the cell membrane. It catalyses the reaction K(+)(out) + ATP + H2O = K(+)(in) + ADP + phosphate + H(+). Part of the high-affinity ATP-driven potassium transport (or Kdp) system, which catalyzes the hydrolysis of ATP coupled with the electrogenic transport of potassium into the cytoplasm. This subunit is responsible for energy coupling to the transport system and for the release of the potassium ions to the cytoplasm. This chain is Potassium-transporting ATPase ATP-binding subunit, found in Bacillus thuringiensis (strain Al Hakam).